A 536-amino-acid polypeptide reads, in one-letter code: CBS domain-containing protein CBSCBSPB2 (536 aa).

Residues 1-23 (MTTTPTSSGRRSISSIRRTSSAS) show a composition bias toward low complexity. The interval 1–60 (MTTTPTSSGRRSISSIRRTSSASKKPVLQSEESESGSGSINENTSKPDSPLAQPVSDGER) is disordered. 4 CBS domains span residues 66–124 (RLSK…LRPE), 132–187 (MTRN…RMEK), 228–287 (VTEN…LSPE), and 295–354 (MTPN…NNSS). Residues 406–489 (VSSFAFKFED…KVLRLHLDFT (84 aa)) form the PB1 domain. The helical transmembrane segment at 509–529 (VWWQTGVLAGAIVLTSIGLFV) threads the bilayer.

The protein resides in the membrane. This is CBS domain-containing protein CBSCBSPB2 (CBSCBSPB2) from Arabidopsis thaliana (Mouse-ear cress).